Consider the following 254-residue polypeptide: Acidic endochitinase (254 aa).

Residues 1-23 (MKFWGSVLALSFVVFLFLTGTLA) form the signal peptide. The Proton donor role is filled by glutamate 91. A disulfide bridge connects residues cysteine 213 and cysteine 245.

Belongs to the glycosyl hydrolase 19 family. Chitinase class II subfamily.

The protein resides in the secreted. The catalysed reaction is Random endo-hydrolysis of N-acetyl-beta-D-glucosaminide (1-&gt;4)-beta-linkages in chitin and chitodextrins.. Functionally, defense against chitin-containing fungal pathogens. This chain is Acidic endochitinase, found in Petunia hybrida (Petunia).